Here is a 417-residue protein sequence, read N- to C-terminus: Serine hydroxymethyltransferase 4 (417 aa).

(6S)-5,6,7,8-tetrahydrofolate is bound by residues L121 and G125–L127. The residue at position 230 (K230) is an N6-(pyridoxal phosphate)lysine. S355–F357 contacts (6S)-5,6,7,8-tetrahydrofolate.

Belongs to the SHMT family. In terms of assembly, homodimer. Requires pyridoxal 5'-phosphate as cofactor.

Its subcellular location is the cytoplasm. The enzyme catalyses (6R)-5,10-methylene-5,6,7,8-tetrahydrofolate + glycine + H2O = (6S)-5,6,7,8-tetrahydrofolate + L-serine. Its pathway is one-carbon metabolism; tetrahydrofolate interconversion. It functions in the pathway amino-acid biosynthesis; glycine biosynthesis; glycine from L-serine: step 1/1. Catalyzes the reversible interconversion of serine and glycine with tetrahydrofolate (THF) serving as the one-carbon carrier. This reaction serves as the major source of one-carbon groups required for the biosynthesis of purines, thymidylate, methionine, and other important biomolecules. Also exhibits THF-independent aldolase activity toward beta-hydroxyamino acids, producing glycine and aldehydes, via a retro-aldol mechanism. This chain is Serine hydroxymethyltransferase 4, found in Colwellia psychrerythraea (strain 34H / ATCC BAA-681) (Vibrio psychroerythus).